A 439-amino-acid chain; its full sequence is MEMEQEKMNLSQELSADSASYNCSACHGDETWSYNHPIRGRAKSRSLSASPALGSTKEFRRTRSLHGPCPVTTFGPKACVLQNPQTIMHIQDPASQRLTWNKSPKSVLVIKKIRDASLLQPFKELCIYLMEENNMIVYVEKKVLEDPAIVSDENFGPVKKKFCTFREDYDDISNQIDFIICLGGDGTLLYASSLFQGSVPPVMAFHLGSLGFLTPFNFENFQSQVNQVIEGNAAVILRSRLKVRVVKEPRDKKTAIHNGLSENGLDTEGGKQAMQYQVLNEVVIDRGPSSYLSNVDVYLDGHLITTVQGDGVIVSTPTGSTAYAAAAGASMVHPNVPAIMVTPICPHSLSFRPIVVPAGVELKIMLSPEARNTAWVSFDGRKRQEIRHGDSISITTSCYPLPSICVCDPVSDWFESLAQCLHWNVRKKQAHFPEDEEDS.

5 positions are modified to phosphoserine: serine 46, serine 48, serine 50, serine 55, and serine 64.

This sequence belongs to the NAD kinase family. A divalent metal cation serves as cofactor.

The enzyme catalyses NAD(+) + ATP = ADP + NADP(+) + H(+). This is NAD kinase (Nadk) from Mus musculus (Mouse).